The chain runs to 122 residues: Histone H2B subacrosomal variant (122 aa).

The segment covering 1–25 has biased composition (basic residues); the sequence is MARNVTKRNKRCRGHQKAIYKKKSH. The disordered stretch occupies residues 1-30; it reads MARNVTKRNKRCRGHQKAIYKKKSHSSSES.

It belongs to the histone H2B family. Testis-specific. Restricted to the spermatid population of seminiferous epithelium. Not present in Sertoli cells, spermatogonia, spermatocytes or cells of the interstitial tissue (at protein level).

It localises to the cytoplasm. May act as an acrosome-nuclear docking protein in sperm. This is Histone H2B subacrosomal variant (SUBH2BV) from Bos taurus (Bovine).